The sequence spans 90 residues: Antitoxin epsilon 1 (90 aa).

It belongs to the epsilon antitoxin family. In terms of assembly, in the presence of the zeta toxin, forms an inactive PezA(2)PezT(2) heterotetramer.

Its function is as follows. Antitoxin component of a type II toxin-antitoxin (TA) system. Neutralizes the toxic effect of zeta toxin. Part of a postsegregational killing (PSK) system involved in the killing of plasmid-free cells. Continuous synthesis of the epsilon antitoxin is required to counteract the zeta toxin. The chain is Antitoxin epsilon 1 from Enterococcus faecalis (Streptococcus faecalis).